The following is a 620-amino-acid chain: 1-deoxy-D-xylulose-5-phosphate synthase (620 aa).

Thiamine diphosphate is bound by residues His-80 and Gly-121–Ser-123. Asp-152 is a Mg(2+) binding site. Residues Gly-153 to Ala-154, Asn-181, Tyr-288, and Glu-370 each bind thiamine diphosphate. Asn-181 contributes to the Mg(2+) binding site.

It belongs to the transketolase family. DXPS subfamily. As to quaternary structure, homodimer. Mg(2+) serves as cofactor. It depends on thiamine diphosphate as a cofactor.

The enzyme catalyses D-glyceraldehyde 3-phosphate + pyruvate + H(+) = 1-deoxy-D-xylulose 5-phosphate + CO2. It participates in metabolic intermediate biosynthesis; 1-deoxy-D-xylulose 5-phosphate biosynthesis; 1-deoxy-D-xylulose 5-phosphate from D-glyceraldehyde 3-phosphate and pyruvate: step 1/1. In terms of biological role, catalyzes the acyloin condensation reaction between C atoms 2 and 3 of pyruvate and glyceraldehyde 3-phosphate to yield 1-deoxy-D-xylulose-5-phosphate (DXP). This chain is 1-deoxy-D-xylulose-5-phosphate synthase, found in Pseudoalteromonas translucida (strain TAC 125).